Consider the following 433-residue polypeptide: Succinate--CoA ligase [ADP-forming] subunit beta, mitochondrial (433 aa).

The transit peptide at 1–23 (MLTRSVLRKAPRAFSPFLQKRNL) directs the protein to the mitochondrion. The 243-residue stretch at 31–273 (HDILRKFGVD…ISQEDPDEAR (243 aa)) folds into the ATP-grasp domain. Residues K68, 75–77 (GRG), and E136 contribute to the ATP site. Mg(2+)-binding residues include N228 and D242. Substrate is bound by residues N293 and 350-352 (GIV).

The protein belongs to the succinate/malate CoA ligase beta subunit family. In terms of assembly, heterodimer of an alpha and a beta subunit. The cofactor is Mg(2+).

It is found in the mitochondrion. The enzyme catalyses succinate + ATP + CoA = succinyl-CoA + ADP + phosphate. The protein operates within carbohydrate metabolism; tricarboxylic acid cycle; succinate from succinyl-CoA (ligase route): step 1/1. In terms of biological role, succinyl-CoA synthetase functions in the citric acid cycle (TCA), coupling the hydrolysis of succinyl-CoA to the synthesis of ATP and thus represents the only step of substrate-level phosphorylation in the TCA. The beta subunit provides nucleotide specificity of the enzyme and binds the substrate succinate, while the binding sites for coenzyme A and phosphate are found in the alpha subunit. This Schizosaccharomyces pombe (strain 972 / ATCC 24843) (Fission yeast) protein is Succinate--CoA ligase [ADP-forming] subunit beta, mitochondrial.